A 1036-amino-acid chain; its full sequence is Phospholipase D1 (1036 aa).

The 132-residue stretch at 81–212 folds into the PX domain; it reads IKAQVLEVER…TEFLDVSQLS (132 aa). One can recognise a PH domain in the interval 219–328; sequence PKGLEGMIMK…WGGAIEEFIQ (110 aa). Residues C240 and C241 are each lipidated (S-palmitoyl cysteine). The PLD phosphodiesterase 1 domain maps to 459 to 486; it reads YLWAHHEKLVIIDQSVAFVGGIDLAYGR. Positions 463–890 are catalytic; the sequence is HHEKLVIIDQ…MLGKRDSEMA (428 aa). Phosphoserine is present on residues S499, S561, and S591. The 28-residue stretch at 853–880 folds into the PLD phosphodiesterase 2 domain; sequence ELIYVHSKLLIADDNTVIIGSANINDRS.

The protein belongs to the phospholipase D family. As to quaternary structure, interacts with PIP5K1B.

The protein resides in the cytoplasm. Its subcellular location is the perinuclear region. It is found in the endoplasmic reticulum membrane. The protein localises to the golgi apparatus membrane. It localises to the late endosome membrane. It carries out the reaction a 1,2-diacyl-sn-glycero-3-phosphocholine + H2O = a 1,2-diacyl-sn-glycero-3-phosphate + choline + H(+). Its activity is regulated as follows. Stimulated by phosphatidylinositol 4,5-bisphosphate and phosphatidylinositol 3,4,5-trisphosphate, activated by the phosphokinase C-alpha, by the ADP-ribosylation factor-1 (ARF-1), and to a lesser extent by GTP-binding proteins: RHO A, RAC-1 and CDC42. Implicated as a critical step in numerous cellular pathways, including signal transduction, membrane trafficking, and the regulation of mitosis. May be involved in the regulation of perinuclear intravesicular membrane traffic. The polypeptide is Phospholipase D1 (PLD1) (Cricetulus griseus (Chinese hamster)).